We begin with the raw amino-acid sequence, 128 residues long: MIVRTLDECRDSERRVASETWESVRMLLKNDNMGFSFHITTIYQDTETHIHYKNHLESVYCMSGEGEIEVVGGETYPIKPGTLYILDKHDEHYLRAYKDKEMVMACVFNPPITGAEVHDENGVYPVLD.

Belongs to the ectoine synthase family.

The catalysed reaction is (2S)-4-acetamido-2-aminobutanoate = L-ectoine + H2O. It functions in the pathway amine and polyamine biosynthesis; ectoine biosynthesis; L-ectoine from L-aspartate 4-semialdehyde: step 3/3. In terms of biological role, catalyzes the circularization of gamma-N-acetyl-alpha,gamma-diaminobutyric acid (ADABA) to ectoine (1,4,5,6-tetrahydro-2-methyl-4-pyrimidine carboxylic acid), which is an excellent osmoprotectant. The chain is L-ectoine synthase from Aliivibrio fischeri (strain ATCC 700601 / ES114) (Vibrio fischeri).